Here is a 424-residue protein sequence, read N- to C-terminus: MLDVKKLRSDFEGVKAQLERRNGTIEGLERFSQLDASRRTMIQEVEELKSKRNDVSEQIAALKRDKKDANSLIAEMKQVSERIKEQDEQLRSIETELEALLLTIPNIPQEDVPYGESEEDNREERKWGDVPDFSFEPRPHWELGTALDILDFERAAKVTGSRFTVYKGLGARLERALINFMMDMHATEHDYTEVLPPYIVNRASMIGTGQLPKFEEDVFKISEEDYFLIPTAEVPVTNLHRGEVLQGEQLPIAYNAYSTNFRSEAGSAGRDTRGLIRQHQFNKVELVRFSLPEDSNNQLEIMTTHAENVLKRLGLPYRVVTLCTGDLTFASTKTYDLEVWMPSANTYREISSCSNIGDFQARRANIKFRRDPKSKPEYVHTLNGSGVAVGRTVAAILENYQQEDGSIVIPEALRPYMGNVNILS.

Residues 109-129 (QEDVPYGESEEDNREERKWGD) are disordered. 231 to 233 (TAE) serves as a coordination point for L-serine. ATP is bound at residue 262–264 (RSE). Glutamate 285 contributes to the L-serine binding site. 349 to 352 (EISS) contacts ATP. Residue serine 385 coordinates L-serine.

It belongs to the class-II aminoacyl-tRNA synthetase family. Type-1 seryl-tRNA synthetase subfamily. Homodimer. The tRNA molecule binds across the dimer.

It is found in the cytoplasm. It carries out the reaction tRNA(Ser) + L-serine + ATP = L-seryl-tRNA(Ser) + AMP + diphosphate + H(+). The enzyme catalyses tRNA(Sec) + L-serine + ATP = L-seryl-tRNA(Sec) + AMP + diphosphate + H(+). It functions in the pathway aminoacyl-tRNA biosynthesis; selenocysteinyl-tRNA(Sec) biosynthesis; L-seryl-tRNA(Sec) from L-serine and tRNA(Sec): step 1/1. Its function is as follows. Catalyzes the attachment of serine to tRNA(Ser). Is also able to aminoacylate tRNA(Sec) with serine, to form the misacylated tRNA L-seryl-tRNA(Sec), which will be further converted into selenocysteinyl-tRNA(Sec). The chain is Serine--tRNA ligase from Shouchella clausii (strain KSM-K16) (Alkalihalobacillus clausii).